The primary structure comprises 467 residues: Putative sulfoquinovose importer (467 aa).

12 helical membrane passes run 17–37, 54–74, 88–108, 121–141, 160–180, 185–205, 238–258, 275–295, 303–323, 325–345, 379–399, and 414–434; these read IAYG…TLYL, IIFL…GFLL, PFIL…FIAT, ALFM…GAMI, GGAT…QSLF, VGYA…MMLC, LLVL…KLAI, WMGF…PLTV, VYLA…FWGS, SFTF…VNSL, ISAA…GYVP, and LIFI…GFFY.

It belongs to the sodium:galactoside symporter (TC 2.A.2) family.

It is found in the cell inner membrane. Functionally, could be involved in sulfoquinovose import. The polypeptide is Putative sulfoquinovose importer (yihO) (Escherichia coli (strain K12)).